Here is a 605-residue protein sequence, read N- to C-terminus: Probable potassium transport system protein Kup (605 aa).

A run of 12 helical transmembrane segments spans residues 17-37 (GLVFGDIGTSPIYTLTVIFAL), 45-65 (VFGILSMVVWTLIILVTVEYA), 96-116 (IAFVGFLSFVGVSLLLGDGVI), 140-160 (LGTLILIAALIAVVLFIFQFK), 165-185 (VAAAFGPLMVLWFGALTVSGL), 211-231 (GISAFFVLSEVILCATGGEAL), 246-266 (AWYFVFVALIINYLGQGAFAL), 286-306 (LYIPFLILTILATVIASQALI), 338-358 (IYIGSVNWFLMLLVIFIMLIF), 367-387 (AYGLAVTGTMTITGIMMTIIF), 394-414 (WKVPVAVAVTIVDVVFLISNL), and 417-437 (LPHGGYWSIILASVPFATILI).

Belongs to the HAK/KUP transporter (TC 2.A.72) family.

The protein localises to the cell inner membrane. The catalysed reaction is K(+)(in) + H(+)(in) = K(+)(out) + H(+)(out). Functionally, transport of potassium into the cell. Likely operates as a K(+):H(+) symporter. The polypeptide is Probable potassium transport system protein Kup (Geotalea uraniireducens (strain Rf4) (Geobacter uraniireducens)).